The chain runs to 149 residues: Transcriptional regulator MraZ (149 aa).

SpoVT-AbrB domains lie at 6-52 (RSYR…TPED) and 81-124 (VEEL…SEEE).

The protein belongs to the MraZ family. Forms oligomers.

It is found in the cytoplasm. The protein localises to the nucleoid. This chain is Transcriptional regulator MraZ, found in Oleidesulfovibrio alaskensis (strain ATCC BAA-1058 / DSM 17464 / G20) (Desulfovibrio alaskensis).